The sequence spans 239 residues: Apoptosis regulator Bcl-2 (239 aa).

Positions Asp-10–Trp-30 match the BH4 motif. The interval Pro-39–Ala-85 is disordered. Residue Thr-69 is modified to Phosphothreonine; by MAPK8. Position 70 is a phosphoserine; by MAPK8 and PKC (Ser-70). Positions Pro-75–Ala-85 are enriched in low complexity. At Ser-87 the chain carries Phosphoserine; by MAPK8. The segment at Val-92–Arg-107 is required for interaction with SEPTIN4 isoform ARTS. Required XIAP-mediated ubiquitination and apoptosis. The BH3 signature appears at Val-93–Arg-107. Positions Glu-136–Gly-155 match the BH1 motif. A BH2 motif is present at residues Thr-187–Tyr-202. Residues Phe-212–Gly-233 traverse the membrane as a helical segment.

The protein belongs to the Bcl-2 family. In terms of assembly, forms homodimers, and heterodimers with BAX, BAD, BAK and Bcl-X(L). Heterodimerization with BAX requires intact BH1 and BH2 motifs, and is necessary for anti-apoptotic activity. Part of a complex composed of SEPTIN4 isoform ARTS, XIAP and BCL2, within the complex interacts (via BH3 domain) with SEPTIN4 isoform ARTS and XIAP, SEPTIN4 isoform ARTS acts as a scaffold protein and stabilizes the complex. Component of the complex, at least composed of LRPPRC, BECN1 and BCL2; the interactions prevent BECN1 from forming an autophagy-inducing complex with PIK3C3. Interacts with EI24. Also interacts with APAF1, BBC3, BCL2L1, BNIPL, MRPL41 and TP53BP2. Binding to FKBP8 seems to target BCL2 to the mitochondria and probably interferes with the binding of BCL2 to its targets. Interacts with BAG1 in an ATP-dependent manner. Interacts with RAF1 (the 'Ser-338' and 'Ser-339' phosphorylated form). Interacts (via the BH4 domain) with EGLN3; the interaction prevents the formation of the BAX-BCL2 complex and inhibits the anti-apoptotic activity of BCL2. Interacts with G0S2; this interaction also prevents the formation of the anti-apoptotic BAX-BCL2 complex. Interacts with RTL10/BOP. Interacts with the SCF(FBXO10) complex. Interacts (via the loop between motifs BH4 and BH3) with NLRP1 (via LRR repeats), but not with NLRP2, NLRP3, NLRP4, PYCARD, nor MEFV. Interacts with GIMAP3/IAN4, GIMAP4/IAN1 and GIMAP5/IAN5. Interacts with BCAP31. Interacts with IRF3; the interaction is inhibited by Sendai virus infection. Interacts with BECN1; thereby inhibiting autophagy in non-starvation conditions. Interacts with AMBRA1; thereby inhibiting autophagy. (Microbial infection) Interacts with Toxoplasma gondii ROP17; the interaction probably promotes BCL2 phosphorylation and degradation. In terms of processing, phosphorylation/dephosphorylation on Ser-70 regulates anti-apoptotic activity. Growth factor-stimulated phosphorylation on Ser-70 by PKC is required for the anti-apoptosis activity and occurs during the G2/M phase of the cell cycle. In the absence of growth factors, BCL2 appears to be phosphorylated by other protein kinases such as ERKs and stress-activated kinases. Phosphorylated by MAPK8/JNK1 at Thr-69, Ser-70 and Ser-87, which stimulates starvation-induced autophagy. Dephosphorylated by protein phosphatase 2A (PP2A). Proteolytically cleaved by caspases during apoptosis. The cleaved protein, lacking the BH4 motif, has pro-apoptotic activity, causes the release of cytochrome c into the cytosol promoting further caspase activity. Post-translationally, monoubiquitinated by PRKN, leading to an increase in its stability. Ubiquitinated by SCF(FBXO10), leading to its degradation by the proteasome. Ubiquitinated by XIAP, leading to its degradation by the proteasome. As to expression, expressed in a variety of tissues.

The protein localises to the mitochondrion outer membrane. It localises to the nucleus membrane. Its subcellular location is the endoplasmic reticulum membrane. The protein resides in the cytoplasm. Suppresses apoptosis in a variety of cell systems including factor-dependent lymphohematopoietic and neural cells. Regulates cell death by controlling the mitochondrial membrane permeability. Appears to function in a feedback loop system with caspases. Inhibits caspase activity either by preventing the release of cytochrome c from the mitochondria and/or by binding to the apoptosis-activating factor (APAF-1). Also acts as an inhibitor of autophagy: interacts with BECN1 and AMBRA1 during non-starvation conditions and inhibits their autophagy function. May attenuate inflammation by impairing NLRP1-inflammasome activation, hence CASP1 activation and IL1B release. This chain is Apoptosis regulator Bcl-2 (BCL2), found in Homo sapiens (Human).